We begin with the raw amino-acid sequence, 305 residues long: Mitochondrial citrate transporter D (305 aa).

Solcar repeat units lie at residues 10 to 101, 111 to 197, and 211 to 298; these read LPFG…WGAF, QTQS…VRAQ, and RNDL…VMDF. Transmembrane regions (helical) follow at residues 16 to 36, 78 to 98, 118 to 137, 176 to 196, 208 to 228, and 270 to 291; these read FIAG…LDVV, SAPI…NDSW, LTGA…FELV, TLWR…QVRA, QQTR…TILN, and LYKG…LLVV.

This sequence belongs to the mitochondrial carrier (TC 2.A.29) family.

The protein localises to the mitochondrion inner membrane. It catalyses the reaction citrate(in) + H(+)(in) = citrate(out) + H(+)(out). Functionally, mitochondrial transporter that mediates citrate export from mitochondria to cytoplasm. Both ctpA, ctpB, and ctpD play important roles in citric acid transport across the mitochondrial membrane and function in a redundant manner. The chain is Mitochondrial citrate transporter D from Aspergillus niger (strain ATCC 1015 / CBS 113.46 / FGSC A1144 / LSHB Ac4 / NCTC 3858a / NRRL 328 / USDA 3528.7).